A 220-amino-acid chain; its full sequence is Chalcone--flavanone isomerase B (220 aa).

Thr50, Asn115, and Thr192 together coordinate substrate.

Belongs to the chalcone isomerase family.

The catalysed reaction is a chalcone = a flavanone.. It functions in the pathway secondary metabolite biosynthesis; flavonoid biosynthesis. Its function is as follows. Catalyzes the intramolecular cyclization of bicyclic chalcones into tricyclic (S)-flavanones. Responsible for the isomerization of 4,2',4',6'-tetrahydroxychalcone (also termed chalcone) into naringenin. The sequence is that of Chalcone--flavanone isomerase B (CHI2) from Petunia hybrida (Petunia).